Reading from the N-terminus, the 265-residue chain is Mlc titration factor A (265 aa).

Zn(2+) is bound by residues H111, H148, H152, and E211.

Belongs to the MtfA family. As to quaternary structure, interacts with Mlc. Requires Zn(2+) as cofactor.

It is found in the cytoplasm. Functionally, involved in the modulation of the activity of the glucose-phosphotransferase system (glucose-PTS). Interacts with the transcriptional repressor Mlc, preventing its interaction with DNA and leading to the modulation of expression of genes regulated by Mlc, including ptsG, which encodes the PTS system glucose-specific EIICB component. In terms of biological role, shows zinc-dependent metallopeptidase activity. The polypeptide is Mlc titration factor A (Salmonella schwarzengrund (strain CVM19633)).